The sequence spans 416 residues: Multifunctional CCA protein (416 aa).

The ATP site is built by Gly8 and Arg11. CTP contacts are provided by Gly8 and Arg11. Mg(2+) is bound by residues Asp21 and Asp23. The ATP site is built by Arg91, Arg137, and Arg140. 3 residues coordinate CTP: Arg91, Arg137, and Arg140. In terms of domain architecture, HD spans 226–327 (TGVHIMLVID…VNLLERCDAF (102 aa)).

The protein belongs to the tRNA nucleotidyltransferase/poly(A) polymerase family. Bacterial CCA-adding enzyme type 1 subfamily. As to quaternary structure, monomer. Can also form homodimers and oligomers. Mg(2+) is required as a cofactor. Ni(2+) serves as cofactor.

It catalyses the reaction a tRNA precursor + 2 CTP + ATP = a tRNA with a 3' CCA end + 3 diphosphate. It carries out the reaction a tRNA with a 3' CCA end + 2 CTP + ATP = a tRNA with a 3' CCACCA end + 3 diphosphate. Catalyzes the addition and repair of the essential 3'-terminal CCA sequence in tRNAs without using a nucleic acid template. Adds these three nucleotides in the order of C, C, and A to the tRNA nucleotide-73, using CTP and ATP as substrates and producing inorganic pyrophosphate. tRNA 3'-terminal CCA addition is required both for tRNA processing and repair. Also involved in tRNA surveillance by mediating tandem CCA addition to generate a CCACCA at the 3' terminus of unstable tRNAs. While stable tRNAs receive only 3'-terminal CCA, unstable tRNAs are marked with CCACCA and rapidly degraded. This is Multifunctional CCA protein from Janthinobacterium sp. (strain Marseille) (Minibacterium massiliensis).